Reading from the N-terminus, the 410-residue chain is Imidazolonepropionase (410 aa).

His-73 and His-75 together coordinate Fe(3+). His-73 and His-75 together coordinate Zn(2+). 4-imidazolone-5-propanoate is bound by residues Arg-82, Tyr-145, and His-178. N-formimidoyl-L-glutamate is bound at residue Tyr-145. His-243 contributes to the Fe(3+) binding site. His-243 serves as a coordination point for Zn(2+). Residue Gln-246 participates in 4-imidazolone-5-propanoate binding. Asp-318 serves as a coordination point for Fe(3+). Asp-318 contacts Zn(2+). Residues Asn-320 and Gly-322 each contribute to the N-formimidoyl-L-glutamate site. 4-imidazolone-5-propanoate is bound at residue Ser-323.

This sequence belongs to the metallo-dependent hydrolases superfamily. HutI family. Zn(2+) serves as cofactor. The cofactor is Fe(3+).

The protein localises to the cytoplasm. The enzyme catalyses 4-imidazolone-5-propanoate + H2O = N-formimidoyl-L-glutamate. The protein operates within amino-acid degradation; L-histidine degradation into L-glutamate; N-formimidoyl-L-glutamate from L-histidine: step 3/3. Its function is as follows. Catalyzes the hydrolytic cleavage of the carbon-nitrogen bond in imidazolone-5-propanoate to yield N-formimidoyl-L-glutamate. It is the third step in the universal histidine degradation pathway. This is Imidazolonepropionase from Shewanella baltica (strain OS223).